We begin with the raw amino-acid sequence, 89 residues long: Elongation factor 1-beta (89 aa).

This sequence belongs to the EF-1-beta/EF-1-delta family.

Its function is as follows. Promotes the exchange of GDP for GTP in EF-1-alpha/GDP, thus allowing the regeneration of EF-1-alpha/GTP that could then be used to form the ternary complex EF-1-alpha/GTP/AAtRNA. This is Elongation factor 1-beta from Methanosarcina mazei (strain ATCC BAA-159 / DSM 3647 / Goe1 / Go1 / JCM 11833 / OCM 88) (Methanosarcina frisia).